The chain runs to 271 residues: Formamidopyrimidine-DNA glycosylase (271 aa).

Pro2 (schiff-base intermediate with DNA) is an active-site residue. The active-site Proton donor is Glu3. The active-site Proton donor; for beta-elimination activity is the Lys58. Residues His92, Arg111, and Arg152 each contribute to the DNA site. The FPG-type zinc finger occupies 237–271 (TVYGREGEPCKQCGRVLKHAMIGQRATVWCGSCQR). Catalysis depends on Arg261, which acts as the Proton donor; for delta-elimination activity.

The protein belongs to the FPG family. In terms of assembly, monomer. The cofactor is Zn(2+).

It carries out the reaction Hydrolysis of DNA containing ring-opened 7-methylguanine residues, releasing 2,6-diamino-4-hydroxy-5-(N-methyl)formamidopyrimidine.. The enzyme catalyses 2'-deoxyribonucleotide-(2'-deoxyribose 5'-phosphate)-2'-deoxyribonucleotide-DNA = a 3'-end 2'-deoxyribonucleotide-(2,3-dehydro-2,3-deoxyribose 5'-phosphate)-DNA + a 5'-end 5'-phospho-2'-deoxyribonucleoside-DNA + H(+). Functionally, involved in base excision repair of DNA damaged by oxidation or by mutagenic agents. Acts as a DNA glycosylase that recognizes and removes damaged bases. Has a preference for oxidized purines, such as 7,8-dihydro-8-oxoguanine (8-oxoG). Has AP (apurinic/apyrimidinic) lyase activity and introduces nicks in the DNA strand. Cleaves the DNA backbone by beta-delta elimination to generate a single-strand break at the site of the removed base with both 3'- and 5'-phosphates. The protein is Formamidopyrimidine-DNA glycosylase of Xanthomonas oryzae pv. oryzae (strain MAFF 311018).